Consider the following 738-residue polypeptide: Catalase-peroxidase (738 aa).

The span at 1–13 shows a compositional bias: gly residues; the sequence is MDGQDIGAGGGCP. The interval 1 to 26 is disordered; sequence MDGQDIGAGGGCPFSGANTNKGRRSN. Residues 98–226 constitute a cross-link (tryptophyl-tyrosyl-methioninium (Trp-Tyr) (with M-252)); it reads WHSAGTYRTA…LAAVQMGLIY (129 aa). His99 functions as the Proton acceptor in the catalytic mechanism. The segment at residues 226-252 is a cross-link (tryptophyl-tyrosyl-methioninium (Tyr-Met) (with W-98)); the sequence is YVNPEGPDGNPDPIASGRDIRETFARM. A heme b-binding site is contributed by His267.

It belongs to the peroxidase family. Peroxidase/catalase subfamily. Homodimer or homotetramer. The cofactor is heme b. Post-translationally, formation of the three residue Trp-Tyr-Met cross-link is important for the catalase, but not the peroxidase activity of the enzyme.

It carries out the reaction H2O2 + AH2 = A + 2 H2O. The enzyme catalyses 2 H2O2 = O2 + 2 H2O. In terms of biological role, bifunctional enzyme with both catalase and broad-spectrum peroxidase activity. The protein is Catalase-peroxidase of Ruegeria sp. (strain TM1040) (Silicibacter sp.).